A 50-amino-acid chain; its full sequence is Large ribosomal subunit protein eL39 (50 aa).

Residues 1–12 (MGKKSKAKKKRL) are compositionally biased toward basic residues. The tract at residues 1–21 (MGKKSKAKKKRLGKLEKQNSR) is disordered.

Belongs to the eukaryotic ribosomal protein eL39 family.

This Haloquadratum walsbyi (strain DSM 16790 / HBSQ001) protein is Large ribosomal subunit protein eL39.